The primary structure comprises 346 residues: Putative D-xylulose reductase (346 aa).

Zn(2+) is bound by residues Cys-39, His-64, and Glu-150.

The protein belongs to the zinc-containing alcohol dehydrogenase family. It depends on Zn(2+) as a cofactor.

The catalysed reaction is xylitol + NAD(+) = D-xylulose + NADH + H(+). The polypeptide is Putative D-xylulose reductase (Rhizobium meliloti (strain 1021) (Ensifer meliloti)).